The sequence spans 113 residues: Ig heavy chain V-III region E109 (113 aa).

One can recognise an Ig-like domain in the interval 1 to 113 (EVKLEESGGG…YWGQGTLVTV (113 aa)). Residues Cys22 and Cys98 are joined by a disulfide bond.

The sequence is that of Ig heavy chain V-III region E109 from Mus musculus (Mouse).